Here is a 984-residue protein sequence, read N- to C-terminus: Detocs histidine-protein kinase DtcA (984 aa).

His645 is modified (phosphohistidine; by autocatalysis).

Post-translationally, autophosphorylated.

It carries out the reaction ATP + protein L-histidine = ADP + protein N-phospho-L-histidine.. Sensor-kinase member of the two-component regulatory system Detocs that confers resistance to bacteriophage. When the system (DtcA-DtcB-DtcC) is expressed in a susceptible E.coli (strain MG1655) it confers resistance to bacteriophages T2, T4, T5, T6 and SECphi27. Detocs inhibits T5 infection leading to growth arrest but not complete cell lysis, during SECphi27 infection leads to cell lysis. DtcA (this subunit) probably autophosphorylates upon sensing viral infection, and subsequently transfers the phosphate signal to DtcC which activates it, leading to an antiviral defense; DtcB may scavenge phosphorylation signals from accidental activation of DtcA. This Vibrio alginolyticus protein is Detocs histidine-protein kinase DtcA.